The sequence spans 194 residues: Type II methyltransferase M.MjaVI (194 aa).

This sequence belongs to the N(4)/N(6)-methyltransferase family. N(4) subfamily.

It carries out the reaction a 2'-deoxycytidine in DNA + S-adenosyl-L-methionine = an N(4)-methyl-2'-deoxycytidine in DNA + S-adenosyl-L-homocysteine + H(+). Its function is as follows. A beta subtype methylase that recognizes the double-stranded sequence 5'-CCGG-3', methylates C-1 on both strands, and protects the DNA from cleavage by the MjaVI endonuclease. The sequence is that of Type II methyltransferase M.MjaVI (mjaVIM) from Methanocaldococcus jannaschii (strain ATCC 43067 / DSM 2661 / JAL-1 / JCM 10045 / NBRC 100440) (Methanococcus jannaschii).